Reading from the N-terminus, the 279-residue chain is Dehydrogenase/reductase SDR family member 4 (279 aa).

37–61 (LVTASTDGIGFAIARRLAEDGAHVV) contributes to the NADP(+) binding site. Lysine 93 carries the N6-acetyllysine; alternate modification. Lysine 93 is subject to N6-succinyllysine; alternate. Lysine 106 bears the N6-acetyllysine mark. Serine 170 contributes to the substrate binding site. The active-site Proton acceptor is tyrosine 183. Lysine 187 is a binding site for NADP(+). Lysine 217 is modified (N6-acetyllysine; alternate). Lysine 217 bears the N6-succinyllysine; alternate mark. At serine 221 the chain carries Phosphoserine. N6-succinyllysine occurs at positions 228 and 235. Residues 277–279 (SRL) carry the Peroxisomal targeting signal motif.

It belongs to the short-chain dehydrogenases/reductases (SDR) family. As to quaternary structure, homotetramer.

The protein localises to the peroxisome. The enzyme catalyses a secondary alcohol + NADP(+) = a ketone + NADPH + H(+). The catalysed reaction is 3alpha-hydroxy-5beta-pregnan-20-one + NADP(+) = 5beta-pregnan-3,20-dione + NADPH + H(+). It catalyses the reaction 5beta-dihydrotestosterone + NADPH + H(+) = 5beta-androstane-3alpha,17beta-diol + NADP(+). It carries out the reaction all-trans-retinol + NADP(+) = all-trans-retinal + NADPH + H(+). The enzyme catalyses isatin + NADPH + H(+) = 3-hydroxyindolin-2-one + NADP(+). Its function is as follows. NADPH-dependent oxidoreductase which catalyzes the reduction of a variety of compounds bearing carbonyl groups including ketosteroids, alpha-dicarbonyl compounds, aldehydes, aromatic ketones and quinones. Reduces all-trans-retinal and 9-cis retinal. Reduces 3-ketosteroids and benzil into 3alpha-hydroxysteroids and S-benzoin, respectively, in contrast to the stereoselectivity of primates DHRS4s which produce 3beta-hydroxysteroids and R-benzoin. In the reverse reaction, catalyzes the NADP-dependent oxidation of 3alpha-hydroxysteroids and alcohol, but with much lower efficiency. Involved in the metabolism of 3alpha-hydroxysteroids, retinoid, isatin and xenobiotic carbonyl compounds. The protein is Dehydrogenase/reductase SDR family member 4 of Mus musculus (Mouse).